We begin with the raw amino-acid sequence, 402 residues long: 4-hydroxy-3-methylbut-2-enyl diphosphate reductase (402 aa).

[4Fe-4S] cluster is bound at residue cysteine 66. Histidine 96 serves as a coordination point for (2E)-4-hydroxy-3-methylbut-2-enyl diphosphate. Histidine 96 serves as a coordination point for dimethylallyl diphosphate. Histidine 96 serves as a coordination point for isopentenyl diphosphate. Position 157 (cysteine 157) interacts with [4Fe-4S] cluster. A (2E)-4-hydroxy-3-methylbut-2-enyl diphosphate-binding site is contributed by histidine 185. Histidine 185 lines the dimethylallyl diphosphate pocket. Position 185 (histidine 185) interacts with isopentenyl diphosphate. The active-site Proton donor is the glutamate 187. Threonine 250 contacts (2E)-4-hydroxy-3-methylbut-2-enyl diphosphate. Position 288 (cysteine 288) interacts with [4Fe-4S] cluster. The (2E)-4-hydroxy-3-methylbut-2-enyl diphosphate site is built by serine 317, serine 318, asparagine 319, and serine 379. Positions 317, 318, 319, and 379 each coordinate dimethylallyl diphosphate. Residues serine 317, serine 318, asparagine 319, and serine 379 each coordinate isopentenyl diphosphate.

This sequence belongs to the IspH family. [4Fe-4S] cluster is required as a cofactor.

The enzyme catalyses isopentenyl diphosphate + 2 oxidized [2Fe-2S]-[ferredoxin] + H2O = (2E)-4-hydroxy-3-methylbut-2-enyl diphosphate + 2 reduced [2Fe-2S]-[ferredoxin] + 2 H(+). The catalysed reaction is dimethylallyl diphosphate + 2 oxidized [2Fe-2S]-[ferredoxin] + H2O = (2E)-4-hydroxy-3-methylbut-2-enyl diphosphate + 2 reduced [2Fe-2S]-[ferredoxin] + 2 H(+). It functions in the pathway isoprenoid biosynthesis; dimethylallyl diphosphate biosynthesis; dimethylallyl diphosphate from (2E)-4-hydroxy-3-methylbutenyl diphosphate: step 1/1. Its pathway is isoprenoid biosynthesis; isopentenyl diphosphate biosynthesis via DXP pathway; isopentenyl diphosphate from 1-deoxy-D-xylulose 5-phosphate: step 6/6. Its function is as follows. Catalyzes the conversion of 1-hydroxy-2-methyl-2-(E)-butenyl 4-diphosphate (HMBPP) into a mixture of isopentenyl diphosphate (IPP) and dimethylallyl diphosphate (DMAPP). Acts in the terminal step of the DOXP/MEP pathway for isoprenoid precursor biosynthesis. The sequence is that of 4-hydroxy-3-methylbut-2-enyl diphosphate reductase from Nostoc punctiforme (strain ATCC 29133 / PCC 73102).